The following is a 177-amino-acid chain: MSDKPASMYRDIDKPAYTRREYITGIPGSKVAQYKMGNFEADPEDYEVQISLIVDEEVQIRHGSLEASRLSANRRMLKELGEDGDYKMILRKFPHQVIRENKQATGAGADRVSDGMRQAFGKIVGTAARINKGERVFTIWCHPEDADAAKDAFRRAYNKISPPCTIKVERGEELLIA.

The protein belongs to the universal ribosomal protein uL16 family.

This Natronomonas pharaonis (strain ATCC 35678 / DSM 2160 / CIP 103997 / JCM 8858 / NBRC 14720 / NCIMB 2260 / Gabara) (Halobacterium pharaonis) protein is Large ribosomal subunit protein uL16.